Reading from the N-terminus, the 562-residue chain is Arginine--tRNA ligase (562 aa).

The short motif at 121 to 131 (PNIAKPISMGH) is the 'HIGH' region element.

It belongs to the class-I aminoacyl-tRNA synthetase family. In terms of assembly, monomer.

It is found in the cytoplasm. It catalyses the reaction tRNA(Arg) + L-arginine + ATP = L-arginyl-tRNA(Arg) + AMP + diphosphate. In Lactiplantibacillus plantarum (strain ATCC BAA-793 / NCIMB 8826 / WCFS1) (Lactobacillus plantarum), this protein is Arginine--tRNA ligase.